Consider the following 139-residue polypeptide: uncharacterized protein (139 aa).

This sequence to E.coli YecT.

This is an uncharacterized protein from Rhizobium meliloti (strain 1021) (Ensifer meliloti).